Reading from the N-terminus, the 217-residue chain is 3,4-dihydroxy-2-butanone 4-phosphate synthase (217 aa).

Residues 37–38, Asp42, 150–154, and Glu174 each bind D-ribulose 5-phosphate; these read RE and RRGHT. Glu38 lines the Mg(2+) pocket. His153 contributes to the Mg(2+) binding site.

The protein belongs to the DHBP synthase family. Homodimer. The cofactor is Mg(2+). Requires Mn(2+) as cofactor.

The enzyme catalyses D-ribulose 5-phosphate = (2S)-2-hydroxy-3-oxobutyl phosphate + formate + H(+). It functions in the pathway cofactor biosynthesis; riboflavin biosynthesis; 2-hydroxy-3-oxobutyl phosphate from D-ribulose 5-phosphate: step 1/1. Catalyzes the conversion of D-ribulose 5-phosphate to formate and 3,4-dihydroxy-2-butanone 4-phosphate. The sequence is that of 3,4-dihydroxy-2-butanone 4-phosphate synthase from Yersinia enterocolitica serotype O:8 / biotype 1B (strain NCTC 13174 / 8081).